The chain runs to 165 residues: Phosphopantetheine adenylyltransferase (165 aa).

Serine 10 contributes to the substrate binding site. Residues 10–11 (SF) and histidine 18 each bind ATP. Substrate is bound by residues lysine 42, leucine 74, and arginine 88. ATP contacts are provided by residues 89–91 (GLR), glutamate 99, and 124–130 (YSYLSSS).

It belongs to the bacterial CoaD family. Homohexamer. The cofactor is Mg(2+).

It is found in the cytoplasm. The enzyme catalyses (R)-4'-phosphopantetheine + ATP + H(+) = 3'-dephospho-CoA + diphosphate. It functions in the pathway cofactor biosynthesis; coenzyme A biosynthesis; CoA from (R)-pantothenate: step 4/5. Functionally, reversibly transfers an adenylyl group from ATP to 4'-phosphopantetheine, yielding dephospho-CoA (dPCoA) and pyrophosphate. This is Phosphopantetheine adenylyltransferase from Halalkalibacterium halodurans (strain ATCC BAA-125 / DSM 18197 / FERM 7344 / JCM 9153 / C-125) (Bacillus halodurans).